Consider the following 372-residue polypeptide: GDSL esterase/lipase At5g45910 (372 aa).

The N-terminal stretch at 1–19 (MRINMLFIVAFSFLVSVRS) is a signal peptide. The Nucleophile role is filled by Ser-37. N-linked (GlcNAc...) asparagine glycosylation is found at Asn-66, Asn-101, and Asn-137. Residues Asp-345 and His-348 contribute to the active site.

This sequence belongs to the 'GDSL' lipolytic enzyme family.

The protein resides in the secreted. This Arabidopsis thaliana (Mouse-ear cress) protein is GDSL esterase/lipase At5g45910.